Consider the following 402-residue polypeptide: MANEFKFTDVGEGLHEGKVTEILKKVGDTIKVDEALFVVETDKVTTELPSPYAGVITAITTNVGDVVHIGQVMAVIDDGAGAAAPAAPQPVSAPAPAPTPTFTPTPAPVTTEPVVEEAGASVVGEIKVSNSVFPIFGVQPSAPQPTPAPVVQPTSAPTPTPAPASAAAPSGEETIAITTMRKAIAEAMVKSHENIPATILTFYVNATKLKQYRESVNGLALSKYNMKISFFAFFVKAIVNALKKFPVFNGRYDKERNLIVLNKDVNVGIAVDTPDGLIVPNIKQAQTKSVVDIAKDIVDLANRARSKQIKLPDLSKGTISVTNFGSLGAAFGTPIIKHPEMCIVATGNMEERVVRAEGGVAVHTILPLTIAADHRWVDGADVGRFGKEIAKQIEELIDLEVA.

In terms of domain architecture, Lipoyl-binding spans 2-77; sequence ANEFKFTDVG…HIGQVMAVID (76 aa). K43 carries the N6-lipoyllysine modification. 2 disordered regions span residues 82-110 and 143-172; these read AAAPAAPQPVSAPAPAPTPTFTPTPAPVT and PQPTPAPVVQPTSAPTPTPAPASAAAPSGE. Composition is skewed to pro residues over residues 87–107 and 143–162; these read APQPVSAPAPAPTPTFTPTPA and PQPTPAPVVQPTSAPTPTPA. H374 is a catalytic residue.

It belongs to the 2-oxoacid dehydrogenase family. In terms of assembly, forms a 24-polypeptide structural core with octahedral symmetry. Requires (R)-lipoate as cofactor.

The catalysed reaction is N(6)-[(R)-dihydrolipoyl]-L-lysyl-[protein] + acetyl-CoA = N(6)-[(R)-S(8)-acetyldihydrolipoyl]-L-lysyl-[protein] + CoA. In terms of biological role, the pyruvate dehydrogenase complex catalyzes the overall conversion of pyruvate to acetyl-CoA and CO(2). It contains multiple copies of three enzymatic components: pyruvate dehydrogenase (E1), dihydrolipoamide acetyltransferase (E2) and lipoamide dehydrogenase (E3). The polypeptide is Dihydrolipoyllysine-residue acetyltransferase component of pyruvate dehydrogenase complex (pdhC) (Mycoplasma pneumoniae (strain ATCC 29342 / M129 / Subtype 1) (Mycoplasmoides pneumoniae)).